Consider the following 837-residue polypeptide: Intestinal mucin-like protein (837 aa).

Repeat copies occupy residues 17 to 27, 28 to 38, 39 to 50, and 51 to 62. The segment at 17-70 is 5 X 11 AA approximate tandem repeats; it reads PSTPSTPPPSTPTTPTSSQTTTPSTPSTTSSKSTPSTPQSTSSKSTPSTPPKTT. The segment at 17-75 is disordered; sequence PSTPSTPPPSTPTTPTSSQTTTPSTPSTTSSKSTPSTPQSTSSKSTPSTPPKTTLPGCL. A compositionally biased stretch (low complexity) spans 29-70; it reads TTPTSSQTTTPSTPSTTSSKSTPSTPQSTSSKSTPSTPPKTT. The 5; truncated repeat unit spans residues 63-70; that stretch reads PSTPPKTT. Residues N91 and N164 are each glycosylated (N-linked (GlcNAc...) asparagine). The 184-residue stretch at 141 to 324 folds into the VWFD domain; it reads CYCTGWGDPH…VNDPSKPHCP (184 aa). 3 disulfide bridges follow: C143-C284, C165-C323, and C189-C197. Positions 149 to 837 are probably important for disulfide-bond mediated mucin polymerization (link domain); the sequence is PHFVTFDGLY…RSSPRLLGRK (689 aa). N-linked (GlcNAc...) asparagine glycans are attached at residues N278, N289, N344, N410, N444, N515, N538, N612, N627, N695, N727, and N749. VWFC domains follow at residues 472–543 and 581–648; these read CGCV…TSCK and GVCV…KKCQ. 4 disulfide bridges follow: C732-C779, C746-C793, C755-C809, and C759-C811. The 86-residue stretch at 732-817 folds into the CTCK domain; it reads CSAIPVMKEI…SCLCQGTVCE (86 aa).

As to quaternary structure, multimeric. As to expression, coats the epithelia of the intestines.

The protein localises to the secreted. This Rattus norvegicus (Rat) protein is Intestinal mucin-like protein.